Consider the following 147-residue polypeptide: Protein phosphatase 1 regulatory subunit 14B (147 aa).

Positions 1 to 15 (MADSGPAGGAALAAP) are enriched in low complexity. Residues 1-55 (MADSGPAGGAALAAPAPGPGSGGAGPRVYFQSPPGAAGEGPGGADDEGPVRRQGK) are disordered. An N-acetylalanine modification is found at A2. S21 is modified (phosphoserine). At Y29 the chain carries Phosphotyrosine. At S32 the chain carries Phosphoserine. T57 carries the phosphothreonine modification. Positions 61–103 (DRKELRKRLNLEEWILEQLTRLYDCQEEEIPELEIDVDELLDM) form a coiled coil.

This sequence belongs to the PP1 inhibitor family. In terms of processing, phosphorylated primarily on Thr-57 by PKC (in vitro). An unknown Ser is also phosphorylated by PKC (in vitro).

The protein resides in the cytoplasm. Its function is as follows. Inhibitor of PPP1CA. Has over 50-fold higher inhibitory activity when phosphorylated. This Sus scrofa (Pig) protein is Protein phosphatase 1 regulatory subunit 14B (PPP1R14B).